Reading from the N-terminus, the 91-residue chain is Heat shock protein 30E (91 aa).

The segment at 62 to 91 is disordered; it reads RDQIRQPGAPESEGTSPNTGKDGKDPGNSL. A compositionally biased stretch (basic and acidic residues) spans 82–91; the sequence is KDGKDPGNSL.

Belongs to the small heat shock protein (HSP20) family.

This Xenopus laevis (African clawed frog) protein is Heat shock protein 30E (hsp30e).